The chain runs to 1001 residues: Serine/threonine-protein kinase TAO1-A (1001 aa).

Positions F28–V281 constitute a Protein kinase domain. ATP contacts are provided by residues I34–V42 and K57. Catalysis depends on D151, which acts as the Proton acceptor. Disordered regions lie at residues P324–H431 and K567–S586. A compositionally biased stretch (low complexity) spans S350 to S370. Basic and acidic residues-rich tracts occupy residues S375–H388 and P577–S586. Coiled coils occupy residues S458–M651 and K754–A877. A disordered region spans residues S911–T1001. Residues H921–P930 show a composition bias toward low complexity. 2 stretches are compositionally biased toward polar residues: residues G949 to Q967 and S974 to T1001.

The protein belongs to the protein kinase superfamily. STE Ser/Thr protein kinase family. STE20 subfamily.

The protein localises to the cytoplasm. The catalysed reaction is L-seryl-[protein] + ATP = O-phospho-L-seryl-[protein] + ADP + H(+). It carries out the reaction L-threonyl-[protein] + ATP = O-phospho-L-threonyl-[protein] + ADP + H(+). Functionally, serine/threonine-protein kinase involved in various processes such as p38/mapk14 stress-activated MAPK cascade, DNA damage response and regulation of cytoskeleton stability. Acts as an activator of the p38/MAPK14 stress-activated MAPK cascade by mediating phosphorylation and subsequent activation of upstream MAP kinase kinases. In response to DNA damage, involved in the G2/M transition DNA damage checkpoint by activating the p38/MAPK14 stress-activated MAPK cascade. In Xenopus laevis (African clawed frog), this protein is Serine/threonine-protein kinase TAO1-A (taok1-a).